The sequence spans 253 residues: Sulfate transporter CysZ (253 aa).

The next 4 helical transmembrane spans lie at 31–51 (FVILPLLVNIVLMGGAFWWLF), 72–92 (LSYLLWPIAVISVLLVFGYFF), 151–171 (IVLLILYFIPGIGQTIAPVLW), and 222–242 (IPVLNLFIMPVAVCGATAMWV).

Belongs to the CysZ family.

The protein localises to the cell inner membrane. In terms of biological role, possibly involved in sulfate transport. High affinity, high specificity proton-dependent sulfate transporter, which mediates sulfate uptake. Provides the sulfur source for the cysteine synthesis pathway. This is Sulfate transporter CysZ from Salmonella typhimurium (strain LT2 / SGSC1412 / ATCC 700720).